The following is a 204-amino-acid chain: uncharacterized protein (204 aa).

It is found in the mitochondrion. This is an uncharacterized protein from Arabidopsis thaliana (Mouse-ear cress).